A 1031-amino-acid chain; its full sequence is Toll-like receptor 9 (1031 aa).

Positions 1–25 (MGPCHGALHPLSLLVQAAALAVALA) are cleaved as a signal peptide. At 26–817 (QGTLPAFLPC…LCLDEALSWD (792 aa)) the chain is on the extracellular side. Cysteines 35 and 45 form a disulfide. 47–51 (WLFLK) contributes to the DNA binding site. LRR repeat units follow at residues 62–85 (RGNV…DFVH), 87–110 (SSLR…HFPC), 122–147 (VPTL…SLVS), 150–166 (LSRT…LAGL), 167–190 (HSLR…ALQV), 198–221 (LGNL…LPPS), 223–242 (EYLL…DLAN), 243–268 (LTAL…CMEC), 283–306 (LNHL…WFHA), 308–332 (GNLM…AFQG), 333–356 (LAQL…HLHL), 363–386 (LLSL…TLRS), 390–413 (LPML…IFGA), 415–440 (PGLR…TGEV), 470–494 (CKTL…MFAR), 496–519 (SRLQ…QFMP), 520–543 (LTSL…SFTE), 545–572 (PRLE…SFVA), 574–598 (LPAL…LCSA), 600–622 (LRAL…LYLH), 627–650 (LRSL…TLDN), 652–675 (PKSL…SLVL), 676–699 (LPRL…SLPN), 701–723 (TQLQ…FFAL), 724–747 (ATRL…WFGS), and 749–772 (AGTL…AFVD). Asparagine 64 is a glycosylation site (N-linked (GlcNAc...) asparagine). DNA is bound by residues 72-77 (SNRIHH) and 95-109 (KWNC…MHFP). The cysteines at positions 98 and 110 are disulfide-linked. The N-linked (GlcNAc...) asparagine glycan is linked to asparagine 129. DNA-binding positions include tyrosine 132, arginine 152, and 179–181 (YYK). Cysteine 178 and cysteine 184 are joined by a disulfide. N-linked (GlcNAc...) asparagine glycosylation occurs at asparagine 200. Tyrosine 208 lines the DNA pocket. N-linked (GlcNAc...) asparagine glycosylation is found at asparagine 210 and asparagine 242. Disulfide bonds link cysteine 255-cysteine 268 and cysteine 258-cysteine 265. Cysteine 258 carries S-palmitoyl cysteine lipidation. Arginine 262 lines the DNA pocket. Residue cysteine 265 is the site of S-palmitoyl cysteine attachment. N-linked (GlcNAc...) asparagine glycosylation is present at asparagine 340. Cysteines 470 and 500 form a disulfide. Asparagine 474 and asparagine 513 each carry an N-linked (GlcNAc...) asparagine glycan. Asparagine 567 carries an N-linked (GlcNAc...) asparagine glycan. Residues asparagine 669, asparagine 694, and asparagine 699 are each glycosylated (N-linked (GlcNAc...) asparagine). Asparagine 731 carries an N-linked (GlcNAc...) asparagine glycan. Intrachain disulfides connect cysteine 764/cysteine 790 and cysteine 766/cysteine 809. A helical membrane pass occupies residues 818–838 (CFGLSLLTVALGLAVPMLHHL). Over 839–1031 (CGWDLWYCFH…NFCRGPTTAE (193 aa)) the chain is Cytoplasmic. Residues 866–1011 (LPYDAFVVFD…SFWAQLGTAL (146 aa)) form the TIR domain.

The protein belongs to the Toll-like receptor family. In terms of assembly, monomer and homodimer. Exists as a monomer in the absence of unmethylated cytidine-phosphate-guanosine (CpG) ligand. Proteolytic processing of an insertion loop (Z-loop) is required for homodimerization upon binding to the unmethylated CpG ligand leading to its activation. Interacts with MYD88 via their respective TIR domains. Interacts with BTK. Interacts (via transmembrane domain) with UNC93B1. Interacts with CD300LH; the interaction may promote full activation of TLR9-triggered innate responses. Interacts with CNPY3 and HSP90B1; this interaction is required for proper folding in the endoplasmic reticulum. Interacts with SMPDL3B. Interacts with CD82; this interaction is essential for TLR9-dependent myddosome formation in response to CpG stimulation. Activated by proteolytic cleavage of the flexible loop between repeats LRR14 and LRR15 within the ectodomain. Cleavage requires UNC93B1. Proteolytically processed by first removing the majority of the ectodomain by either asparagine endopeptidase (AEP) or a cathepsin followed by a trimming event that is solely cathepsin mediated and required for optimal receptor signaling. In terms of processing, palmitoylated by ZDHHC3 in the Golgi regulates TLR9 trafficking from the Golgi to endosomes. Depalmitoylation by PPT1 controls the release of TLR9 from UNC93B1 in endosomes.

The protein localises to the endoplasmic reticulum membrane. Its subcellular location is the endosome. It localises to the lysosome. The protein resides in the cytoplasmic vesicle. It is found in the phagosome. Its function is as follows. Key component of innate and adaptive immunity. TLRs (Toll-like receptors) control host immune response against pathogens through recognition of molecular patterns specific to microorganisms. TLR9 is a nucleotide-sensing TLR which is activated by unmethylated cytidine-phosphate-guanosine (CpG) dinucleotides. Acts via MYD88 and TRAF6, leading to NF-kappa-B activation, cytokine secretion and the inflammatory response. Upon CpG stimulation, induces B-cell proliferation, activation, survival and antibody production. This Felis catus (Cat) protein is Toll-like receptor 9 (TLR9).